A 227-amino-acid polypeptide reads, in one-letter code: Aspartyl protease inhibitor (227 aa).

The N-terminal stretch at 1–15 is a signal peptide; that stretch reads MKLVVLCVLCGIALA. Residues 88–109 are compositionally biased toward basic and acidic residues; it reads SLKSRMAGKKEKAVTPKEEDLP. The interval 88–116 is disordered; it reads SLKSRMAGKKEKAVTPKEEDLPKAPQKPS. A disulfide bond links Cys-131 and Cys-223.

Belongs to the protease inhibitor I33 family.

It localises to the secreted. Its function is as follows. Aspartyl protease inhibitor. The protein is Aspartyl protease inhibitor (API) of Ostertagia ostertagi (Brown stomach worm).